We begin with the raw amino-acid sequence, 400 residues long: Formate-dependent phosphoribosylglycinamide formyltransferase (400 aa).

Residues E22–L23 and E82 contribute to the N(1)-(5-phospho-beta-D-ribosyl)glycinamide site. ATP is bound by residues R115, K157, S162–Q167, E197–I200, and E205. In terms of domain architecture, ATP-grasp spans R120–L315. 2 residues coordinate Mg(2+): E274 and E286. N(1)-(5-phospho-beta-D-ribosyl)glycinamide contacts are provided by residues D293, K362, and R369–R370.

This sequence belongs to the PurK/PurT family. Homodimer.

The catalysed reaction is N(1)-(5-phospho-beta-D-ribosyl)glycinamide + formate + ATP = N(2)-formyl-N(1)-(5-phospho-beta-D-ribosyl)glycinamide + ADP + phosphate + H(+). It participates in purine metabolism; IMP biosynthesis via de novo pathway; N(2)-formyl-N(1)-(5-phospho-D-ribosyl)glycinamide from N(1)-(5-phospho-D-ribosyl)glycinamide (formate route): step 1/1. Its function is as follows. Involved in the de novo purine biosynthesis. Catalyzes the transfer of formate to 5-phospho-ribosyl-glycinamide (GAR), producing 5-phospho-ribosyl-N-formylglycinamide (FGAR). Formate is provided by PurU via hydrolysis of 10-formyl-tetrahydrofolate. The protein is Formate-dependent phosphoribosylglycinamide formyltransferase of Cupriavidus metallidurans (strain ATCC 43123 / DSM 2839 / NBRC 102507 / CH34) (Ralstonia metallidurans).